A 166-amino-acid chain; its full sequence is Large ribosomal subunit protein uL10 (166 aa).

It belongs to the universal ribosomal protein uL10 family. As to quaternary structure, part of the ribosomal stalk of the 50S ribosomal subunit. The N-terminus interacts with L11 and the large rRNA to form the base of the stalk. The C-terminus forms an elongated spine to which L12 dimers bind in a sequential fashion forming a multimeric L10(L12)X complex.

In terms of biological role, forms part of the ribosomal stalk, playing a central role in the interaction of the ribosome with GTP-bound translation factors. The sequence is that of Large ribosomal subunit protein uL10 from Shouchella clausii (strain KSM-K16) (Alkalihalobacillus clausii).